We begin with the raw amino-acid sequence, 417 residues long: NADH-quinone oxidoreductase subunit D (417 aa).

It belongs to the complex I 49 kDa subunit family. In terms of assembly, NDH-1 is composed of 14 different subunits. Subunits NuoB, C, D, E, F, and G constitute the peripheral sector of the complex.

Its subcellular location is the cell inner membrane. The catalysed reaction is a quinone + NADH + 5 H(+)(in) = a quinol + NAD(+) + 4 H(+)(out). Its function is as follows. NDH-1 shuttles electrons from NADH, via FMN and iron-sulfur (Fe-S) centers, to quinones in the respiratory chain. The immediate electron acceptor for the enzyme in this species is believed to be ubiquinone. Couples the redox reaction to proton translocation (for every two electrons transferred, four hydrogen ions are translocated across the cytoplasmic membrane), and thus conserves the redox energy in a proton gradient. This Nitrosococcus oceani (strain ATCC 19707 / BCRC 17464 / JCM 30415 / NCIMB 11848 / C-107) protein is NADH-quinone oxidoreductase subunit D.